A 92-amino-acid chain; its full sequence is Putative membrane protein insertion efficiency factor (92 aa).

Belongs to the UPF0161 family.

Its subcellular location is the cell membrane. In terms of biological role, could be involved in insertion of integral membrane proteins into the membrane. This chain is Putative membrane protein insertion efficiency factor, found in Tropheryma whipplei (strain TW08/27) (Whipple's bacillus).